A 262-amino-acid chain; its full sequence is Trypsin eta (262 aa).

The first 22 residues, 1-22 (MNKVILRILAVLFLLGIYAVSA), serve as a signal peptide directing secretion. Residues 23-27 (QSDGR) constitute a propeptide, activation peptide. The 232-residue stretch at 28 to 259 (IVGGADTSSY…YKDWIAKQRT (232 aa)) folds into the Peptidase S1 domain. Residues cysteine 59 and cysteine 75 are joined by a disulfide bond. Residues histidine 74 and aspartate 120 each act as charge relay system in the active site. 2 disulfide bridges follow: cysteine 185-cysteine 200 and cysteine 211-cysteine 235. The active-site Charge relay system is the serine 215.

This sequence belongs to the peptidase S1 family.

The protein resides in the secreted. Its subcellular location is the extracellular space. The catalysed reaction is Preferential cleavage: Arg-|-Xaa, Lys-|-Xaa.. The sequence is that of Trypsin eta (etaTry) from Drosophila melanogaster (Fruit fly).